Consider the following 314-residue polypeptide: Aromatic prenyltransferase (314 aa).

The protein belongs to the aromatic prenyltransferase family.

Prenyltransferase that attaches isoprenoid moieties to carbon atoms of aromatic substrates in an enzyme-catalyzed Friedel-Crafts reaction. In Arthroderma otae (strain ATCC MYA-4605 / CBS 113480) (Microsporum canis), this protein is Aromatic prenyltransferase.